A 307-amino-acid polypeptide reads, in one-letter code: MADLKAVQEADVRQRPQASIKLFWKELSAVVKIGIVNSNLITTFAGMWLAFYFTGERFLENLHIVFFTLFGAALVIAGSCSINNFIDRDIDQHMERTKTRPTVTGTMEPRRVLWLGVTLVAIGTMSLLMTTVTAAIVGLIGVVTYVFLYTLWTKRNYTLNTVVGSISGAVPPVIGWTAVDSDFHIVPLILFLIMFLWQPPHFLALAMKRCEEYRAAGIPMLPVVHGFEMTKRQIIVWVACLLPLPFYLFSLGIPFLIVATVLNVGWLLLGLWGLKMKDDIKWAKLMFVYSLNYLTILFVAMVIATIW.

The next 9 membrane-spanning stretches (helical) occupy residues 33-53 (IGIV…AFYF), 62-82 (LHIV…SCSI), 111-131 (RVLW…LMTT), 132-152 (VTAA…YTLW), 159-179 (LNTV…WTAV), 185-205 (IVPL…FLAL), 229-249 (MTKR…FYLF), 251-271 (LGIP…LLGL), and 287-307 (FVYS…ATIW).

Belongs to the UbiA prenyltransferase family. Protoheme IX farnesyltransferase subfamily. Interacts with CtaA.

The protein resides in the cell membrane. The catalysed reaction is heme b + (2E,6E)-farnesyl diphosphate + H2O = Fe(II)-heme o + diphosphate. Its pathway is porphyrin-containing compound metabolism; heme O biosynthesis; heme O from protoheme: step 1/1. Functionally, converts heme B (protoheme IX) to heme O by substitution of the vinyl group on carbon 2 of heme B porphyrin ring with a hydroxyethyl farnesyl side group. This is Protoheme IX farnesyltransferase from Geobacillus thermodenitrificans (strain NG80-2).